The following is a 784-amino-acid chain: Protein DBF4 homolog B (784 aa).

The 91-residue stretch at 27–117 (CREITFAGKS…SRGKQLLKKV (91 aa)) folds into the BRCT domain. Residues 222–243 (TVKKKDPGDQEEEEGQRSQKPQ) form a disordered region. The DBF4-type zinc-finger motif lies at 244-293 (ARKRKGYCECCEETFDTLSEHLVGEHHFRFVSNPLSYKMIDDLAAQLTCD). Zn(2+) is bound by residues Cys-251, Cys-254, His-264, and His-270. 3 disordered regions span residues 299 to 332 (FGSP…GNEG), 348 to 368 (HADC…AEEP), and 495 to 529 (TVGS…AQPA). Over residues 498–507 (SQGDVTSHSA) the composition is skewed to polar residues.

In terms of assembly, forms a complex with cdc7. Phosphorylated. Stably phosphorylated throughout the cell cycle.

The protein resides in the nucleus. In terms of biological role, regulatory subunit for cdc7 which activates its kinase activity thereby playing a central role in DNA replication and cell proliferation. Specifically required during the initiation of DNA replication in egg and during early embryonic development. The complex cdc7-dbf4b phosphorylates mcm2 and mcm4 subunits and is required for cdc45 loading. The chain is Protein DBF4 homolog B (dbf4b) from Xenopus laevis (African clawed frog).